We begin with the raw amino-acid sequence, 178 residues long: Protein SPEAR1 (178 aa).

Disordered regions lie at residues 1 to 48 (MGST…QRGL) and 139 to 178 (HFLN…RLSL). A compositionally biased stretch (low complexity) spans 14–28 (SSPPSSSPTSSSSSP). Positions 46 to 54 (RGLGVAQLE) match the SPL motif. Polar residues predominate over residues 144–167 (DPSSTTRRSKSLGSGIQHSGSSEN). An EAR motif is present at residues 170 to 176 (VDLELRL).

In terms of assembly, interacts with SPL and SPEAR2. As to expression, not detected in leaves.

Adapter-like transcriptional repressor recruiting TPL/TPR corepressors to inhibit TCP transcription factors. The sequence is that of Protein SPEAR1 from Arabidopsis thaliana (Mouse-ear cress).